The following is a 170-amino-acid chain: Probable inosine/xanthosine triphosphatase (170 aa).

7–12 (TTNPVK) lines the substrate pocket. Mg(2+) is bound at residue aspartate 37.

The protein belongs to the YjjX NTPase family. As to quaternary structure, homodimer. Mg(2+) serves as cofactor. The cofactor is Mn(2+).

It catalyses the reaction XTP + H2O = XDP + phosphate + H(+). The enzyme catalyses ITP + H2O = IDP + phosphate + H(+). Functionally, phosphatase that hydrolyzes non-canonical purine nucleotides such as XTP and ITP to their respective diphosphate derivatives. Probably excludes non-canonical purines from DNA/RNA precursor pool, thus preventing their incorporation into DNA/RNA and avoiding chromosomal lesions. The chain is Probable inosine/xanthosine triphosphatase from Methanopyrus kandleri (strain AV19 / DSM 6324 / JCM 9639 / NBRC 100938).